The primary structure comprises 245 residues: MGRLDGKVIVLTAAAQGIGRASALAFAREGAKVIATDINESKLQELESYRGIQTRVLDVTKKRQIDQFASEIERIDVLFNVAGFVHHGTILDCEEKDWDFSMNLNVRSMFLMIKAFLPKMLAQKSGNIINMSSVASSIKGVENRCVYSATKAAVIGLTKSVAADFIQQGIRCNCVCPGTVDTPSLQERIQARDNPKEALKTFLNRQKTGRFASAEEVALLCVYLASDESAYVTGNPVIIDGGWSL.

Residues 16 to 18, D37, and D58 each bind NAD(+); that span reads QGI. A substrate-binding site is contributed by R144. The active-site Proton acceptor is Y147. Residues K151 and 180–184 contribute to the NAD(+) site; that span reads VDTPS. 2 residues coordinate substrate: R188 and R205.

Belongs to the short-chain dehydrogenases/reductases (SDR) family. Homotetramer. As to expression, detected in liver, spleen and macrophages. Widely expressed.

Its subcellular location is the cytoplasm. It catalyses the reaction cis-4-hydroxy-L-proline + NAD(+) = 4-oxo-L-proline + NADH + H(+). It carries out the reaction (R)-3-hydroxybutanoate + NAD(+) = acetoacetate + NADH + H(+). The protein operates within amino-acid metabolism. It participates in siderophore biosynthesis. In terms of biological role, NAD(H)-dependent dehydrogenase/reductase with a preference for cyclic substrates. Catalyzes stereoselective conversion of 4-oxo-L-proline to cis-4-hydroxy-L-proline, likely a detoxification mechanism for ketoprolines. Mediates the formation of 2,5-dihydroxybenzoate (2,5-DHBA), a siderophore that chelates free cytoplasmic iron and associates with LCN2, thereby regulating iron transport and homeostasis while protecting cells against free radical-induced oxidative stress. The iron-siderophore complex is imported into mitochondria, providing an iron source for mitochondrial metabolic processes in particular heme synthesis. May act as a 3-hydroxybutyrate dehydrogenase. (Microbial infection) May play a role in susceptibility to bacterial infection by providing an assimilable source of iron that is exploited by pathogenic bacteria. Host iron-siderophore complexes can be used by bacteria to promote their own growth and pathogenicity. In Mus musculus (Mouse), this protein is Dehydrogenase/reductase SDR family member 6.